We begin with the raw amino-acid sequence, 412 residues long: Putative competence-damage inducible protein (412 aa).

This sequence belongs to the CinA family.

The chain is Putative competence-damage inducible protein from Bacillus cereus (strain B4264).